Here is a 386-residue protein sequence, read N- to C-terminus: MGKNEIVAMILAGGQGSRLGVLTKKLAKPAVPFGGKYRIIDFPLSNCSNSGIYTVGVLTQYKPLELNAHIGIGEAWDLDRAHGGVHVLPPYQEEKGGEWYKGTANAIYQNIEFVDRYDPEYILILSGDHIYKMDYTKMLDFHKEKQAEATIAVIEVPMDEASRFGIMNTREDLSIYEFEEKPKNPKNNLASMGIYIFNWKTLKKYLREDESDKTSKNDFGMNIIPSMLGNGNKMVAYPFKGYWKDVGTIDSLWEANMDLIREDNELDLHDEEWKIYSVNPVRPAQYIGENAKVSNSLVVEGCVVNGQVESSILFQGVQIGKNSVVRDSIIMTDAKIGDNVVIEKAIVGSGAIVRKDCKISLGDEIAIIAAKEEVKMGTVIENNKAV.

Residues Y100, G165, 180 to 181, and S191 each bind alpha-D-glucose 1-phosphate; that span reads EK.

This sequence belongs to the bacterial/plant glucose-1-phosphate adenylyltransferase family. As to quaternary structure, homotetramer.

The catalysed reaction is alpha-D-glucose 1-phosphate + ATP + H(+) = ADP-alpha-D-glucose + diphosphate. It participates in glycan biosynthesis; glycogen biosynthesis. Functionally, involved in the biosynthesis of ADP-glucose, a building block required for the elongation reactions to produce glycogen. Catalyzes the reaction between ATP and alpha-D-glucose 1-phosphate (G1P) to produce pyrophosphate and ADP-Glc. In Clostridium beijerinckii (strain ATCC 51743 / NCIMB 8052) (Clostridium acetobutylicum), this protein is Glucose-1-phosphate adenylyltransferase.